The primary structure comprises 173 residues: Invasion protein B homolog BruAb1_0366 (173 aa).

The first 23 residues, 1 to 23 (MKNYRAIGLAFTFTALSSLSAFA), serve as a signal peptide directing secretion.

Belongs to the IalB family.

This is Invasion protein B homolog BruAb1_0366 from Brucella abortus biovar 1 (strain 9-941).